We begin with the raw amino-acid sequence, 401 residues long: Dual-specificity RNA methyltransferase RlmN (401 aa).

Residue Glu114 is the Proton acceptor of the active site. The Radical SAM core domain occupies 120 to 365 (DKGRGTLCVS…TMVRRTRGDD (246 aa)). Cys127 and Cys370 are disulfide-bonded. [4Fe-4S] cluster contacts are provided by Cys134, Cys138, and Cys141. S-adenosyl-L-methionine-binding positions include 187–188 (GE), Ser219, 241–243 (SLH), and Asn327. Cys370 (S-methylcysteine intermediate) is an active-site residue.

It belongs to the radical SAM superfamily. RlmN family. [4Fe-4S] cluster is required as a cofactor.

Its subcellular location is the cytoplasm. It catalyses the reaction adenosine(2503) in 23S rRNA + 2 reduced [2Fe-2S]-[ferredoxin] + 2 S-adenosyl-L-methionine = 2-methyladenosine(2503) in 23S rRNA + 5'-deoxyadenosine + L-methionine + 2 oxidized [2Fe-2S]-[ferredoxin] + S-adenosyl-L-homocysteine. It carries out the reaction adenosine(37) in tRNA + 2 reduced [2Fe-2S]-[ferredoxin] + 2 S-adenosyl-L-methionine = 2-methyladenosine(37) in tRNA + 5'-deoxyadenosine + L-methionine + 2 oxidized [2Fe-2S]-[ferredoxin] + S-adenosyl-L-homocysteine. Specifically methylates position 2 of adenine 2503 in 23S rRNA and position 2 of adenine 37 in tRNAs. m2A2503 modification seems to play a crucial role in the proofreading step occurring at the peptidyl transferase center and thus would serve to optimize ribosomal fidelity. The protein is Dual-specificity RNA methyltransferase RlmN of Xanthomonas axonopodis pv. citri (strain 306).